The following is a 462-amino-acid chain: 3beta-hydroxysteroid dehydrogenase/Delta(5)-Delta(4) isomerase 1 (462 aa).

Residues 51–56 (GGAGHL), Tyr-220, and Lys-224 each bind NAD(+). Lys-224 functions as the Proton donor in the catalytic mechanism. The next 2 membrane-spanning stretches (helical) occupy residues 321–341 (VGTF…SSMI) and 428–448 (VAVL…FTFW).

It belongs to the 3-beta-HSD family. As to expression, expressed exclusively in the neuron-like XXX(L/R) cells through all four larval stages and becomes fainter in adults.

Its subcellular location is the membrane. It catalyses the reaction a 3beta-hydroxy-Delta(5)-steroid + NAD(+) = a 3-oxo-Delta(5)-steroid + NADH + H(+). The catalysed reaction is cholesterol + NAD(+) = cholest-5-en-3-one + NADH + H(+). The enzyme catalyses a 3-oxo-Delta(5)-steroid = a 3-oxo-Delta(4)-steroid. It carries out the reaction cholest-5-en-3-one = cholest-4-en-3-one. Its pathway is steroid hormone biosynthesis; dafachronic acid biosynthesis. Hydroxysteroid dehydrogenase involved in the biosynthesis of dafrachonic acids. Catalyzes the dehydrogenation of cholesterol or its derivatives and the isomerization of the double carbon bond on the sterol ring. Modifies sterols into a Delta(4)-3-keto-sterols such as cholest-4-en-3-one, precursor of Delta(4)-dafachronic acid. Contributes to the production of Delta(7)-dafachronic acid in the XXX cells. Dafachronic acids act as ligands and bind directly to the nuclear hormone receptor (NHR) daf-12 suppressing dauer formation and inducing reproductive growth. Acts in parallel to AKT-1 to promote reproductive development via DAF-16/FoxO and DAF-12. The polypeptide is 3beta-hydroxysteroid dehydrogenase/Delta(5)-Delta(4) isomerase 1 (Caenorhabditis elegans).